Reading from the N-terminus, the 134-residue chain is Large-conductance mechanosensitive channel (134 aa).

The next 2 helical transmembrane spans lie at 16 to 36 and 84 to 104; these read VIDL…VTAL and INTL…IKVI.

The protein belongs to the MscL family. In terms of assembly, homopentamer.

The protein localises to the cell inner membrane. Its function is as follows. Channel that opens in response to stretch forces in the membrane lipid bilayer. May participate in the regulation of osmotic pressure changes within the cell. The protein is Large-conductance mechanosensitive channel of Stenotrophomonas maltophilia (strain R551-3).